A 156-amino-acid polypeptide reads, in one-letter code: ATP synthase subunit b (156 aa).

Residues 7–27 (LIGELIAFTVFVLFCMKFVWP) traverse the membrane as a helical segment.

The protein belongs to the ATPase B chain family. F-type ATPases have 2 components, F(1) - the catalytic core - and F(0) - the membrane proton channel. F(1) has five subunits: alpha(3), beta(3), gamma(1), delta(1), epsilon(1). F(0) has three main subunits: a(1), b(2) and c(10-14). The alpha and beta chains form an alternating ring which encloses part of the gamma chain. F(1) is attached to F(0) by a central stalk formed by the gamma and epsilon chains, while a peripheral stalk is formed by the delta and b chains.

The protein localises to the cell inner membrane. F(1)F(0) ATP synthase produces ATP from ADP in the presence of a proton or sodium gradient. F-type ATPases consist of two structural domains, F(1) containing the extramembraneous catalytic core and F(0) containing the membrane proton channel, linked together by a central stalk and a peripheral stalk. During catalysis, ATP synthesis in the catalytic domain of F(1) is coupled via a rotary mechanism of the central stalk subunits to proton translocation. In terms of biological role, component of the F(0) channel, it forms part of the peripheral stalk, linking F(1) to F(0). The polypeptide is ATP synthase subunit b (Pseudoalteromonas translucida (strain TAC 125)).